We begin with the raw amino-acid sequence, 351 residues long: Photosystem II D2 protein (351 aa).

A helical transmembrane segment spans residues 39–59 (TAYLALGGWFTGTTFVTSWYT). Histidine 116 is a chlorophyll a binding site. A helical transmembrane segment spans residues 123 to 139 (GFMLRQFEIARLVGIRP). 2 residues coordinate pheophytin a: glutamine 128 and asparagine 141. The chain crosses the membrane as a helical span at residues 151-164 (VFLACFLIYPLGQH). Chlorophyll a is bound at residue histidine 196. A helical transmembrane segment spans residues 206–226 (GALLCGIHGATVQNTLFEDGA). A plastoquinone is bound by residues histidine 213 and phenylalanine 260. Histidine 213 is a binding site for Fe cation. Histidine 267 lines the Fe cation pocket. Residues 277 to 293 (GMWTPSVGIVGLAVNLR) traverse the membrane as a helical segment.

Belongs to the reaction center PufL/M/PsbA/D family. In terms of assembly, PSII is composed of 1 copy each of membrane proteins PsbA, PsbB, PsbC, PsbD, PsbE, PsbF, PsbH, PsbI, PsbJ, PsbK, PsbL, PsbM, PsbT, PsbX, PsbY, Psb30/Ycf12, peripheral proteins PsbO, CyanoQ (PsbQ), PsbU, PsbV and a large number of cofactors. It forms dimeric complexes. The cofactor is The D1/D2 heterodimer binds P680, chlorophylls that are the primary electron donor of PSII, and subsequent electron acceptors. It shares a non-heme iron and each subunit binds pheophytin, quinone, additional chlorophylls, carotenoids and lipids. There is also a Cl(-1) ion associated with D1 and D2, which is required for oxygen evolution. The PSII complex binds additional chlorophylls, carotenoids and specific lipids..

Its subcellular location is the cellular thylakoid membrane. The enzyme catalyses 2 a plastoquinone + 4 hnu + 2 H2O = 2 a plastoquinol + O2. Photosystem II (PSII) is a light-driven water:plastoquinone oxidoreductase that uses light energy to abstract electrons from H(2)O, generating O(2) and a proton gradient subsequently used for ATP formation. It consists of a core antenna complex that captures photons, and an electron transfer chain that converts photonic excitation into a charge separation. The D1/D2 (PsbA/PsbD) reaction center heterodimer binds P680, the primary electron donor of PSII as well as several subsequent electron acceptors. D2 is needed for assembly of a stable PSII complex. The sequence is that of Photosystem II D2 protein from Prochlorococcus marinus (strain MIT 9313).